We begin with the raw amino-acid sequence, 595 residues long: Aspartate--tRNA(Asp/Asn) ligase (595 aa).

E175 provides a ligand contact to L-aspartate. An aspartate region spans residues 199 to 202 (QQFK). Residues R221 and H451 each contribute to the L-aspartate site. 221-223 (RDE) is a binding site for ATP. E485 lines the ATP pocket. R492 is an L-aspartate binding site. 537-540 (GVDR) provides a ligand contact to ATP.

This sequence belongs to the class-II aminoacyl-tRNA synthetase family. Type 1 subfamily. As to quaternary structure, homodimer.

It is found in the cytoplasm. The catalysed reaction is tRNA(Asx) + L-aspartate + ATP = L-aspartyl-tRNA(Asx) + AMP + diphosphate. Functionally, aspartyl-tRNA synthetase with relaxed tRNA specificity since it is able to aspartylate not only its cognate tRNA(Asp) but also tRNA(Asn). Reaction proceeds in two steps: L-aspartate is first activated by ATP to form Asp-AMP and then transferred to the acceptor end of tRNA(Asp/Asn). The sequence is that of Aspartate--tRNA(Asp/Asn) ligase from Acidiphilium cryptum (strain JF-5).